The primary structure comprises 379 residues: Chorismate synthase (379 aa).

2 residues coordinate NADP(+): Arg48 and Arg54. FMN contacts are provided by residues 125 to 127 (RSS), 241 to 242 (NA), Gly286, 301 to 305 (KPTSS), and Arg327.

Belongs to the chorismate synthase family. Homotetramer. Requires FMNH2 as cofactor.

It catalyses the reaction 5-O-(1-carboxyvinyl)-3-phosphoshikimate = chorismate + phosphate. It functions in the pathway metabolic intermediate biosynthesis; chorismate biosynthesis; chorismate from D-erythrose 4-phosphate and phosphoenolpyruvate: step 7/7. Its function is as follows. Catalyzes the anti-1,4-elimination of the C-3 phosphate and the C-6 proR hydrogen from 5-enolpyruvylshikimate-3-phosphate (EPSP) to yield chorismate, which is the branch point compound that serves as the starting substrate for the three terminal pathways of aromatic amino acid biosynthesis. This reaction introduces a second double bond into the aromatic ring system. This chain is Chorismate synthase, found in Rhodospirillum centenum (strain ATCC 51521 / SW).